Reading from the N-terminus, the 410-residue chain is LanC-like protein GCR2 (410 aa).

The Zn(2+) site is built by Cys283, Cys328, and His329.

It belongs to the LanC-like protein family. In terms of assembly, may interact (via C-terminus) with GPA1.

May play a role in abscisic acid (ABA) signaling. The sequence is that of LanC-like protein GCR2 (GCR2) from Arabidopsis thaliana (Mouse-ear cress).